The chain runs to 240 residues: Purine nucleoside phosphorylase DeoD-type (240 aa).

His-5 provides a ligand contact to a purine D-ribonucleoside. Residues Gly-21, Arg-25, Arg-44, and 88-91 each bind phosphate; that span reads RVGS. A purine D-ribonucleoside is bound by residues 180–182 and 204–205; these read EME and SD. The Proton donor role is filled by Asp-205.

This sequence belongs to the PNP/UDP phosphorylase family. In terms of assembly, homohexamer; trimer of homodimers.

The enzyme catalyses a purine D-ribonucleoside + phosphate = a purine nucleobase + alpha-D-ribose 1-phosphate. The catalysed reaction is a purine 2'-deoxy-D-ribonucleoside + phosphate = a purine nucleobase + 2-deoxy-alpha-D-ribose 1-phosphate. Functionally, catalyzes the reversible phosphorolytic breakdown of the N-glycosidic bond in the beta-(deoxy)ribonucleoside molecules, with the formation of the corresponding free purine bases and pentose-1-phosphate. The chain is Purine nucleoside phosphorylase DeoD-type from Actinobacillus pleuropneumoniae serotype 5b (strain L20).